The primary structure comprises 914 residues: DNA mismatch repair protein MutS (914 aa).

The interval 1–25 (MDKKNDHKNNLIPQPASSFASSQER) is disordered. Polar residues predominate over residues 11 to 25 (LIPQPASSFASSQER). ATP is bound at residue 662–669 (GPNMGGKS).

Belongs to the DNA mismatch repair MutS family.

In terms of biological role, this protein is involved in the repair of mismatches in DNA. It is possible that it carries out the mismatch recognition step. This protein has a weak ATPase activity. This chain is DNA mismatch repair protein MutS, found in Bartonella tribocorum (strain CIP 105476 / IBS 506).